Reading from the N-terminus, the 622-residue chain is Low affinity potassium transport system protein Kup (622 aa).

12 consecutive transmembrane segments (helical) span residues 9–29 (LPAI…TSPL), 49–69 (VFGF…IKYL), 103–123 (VIMG…TPAI), 137–157 (PQLD…LFMI), 165–185 (VGKL…GLGL), 213–233 (VSFI…ALYA), 247–267 (WFTV…ALLL), 276–296 (PFFL…AALA), 337–357 (IYIP…IVSF), 363–383 (LAAA…ILST), 396–416 (FVAL…TANL), and 419–439 (LLSG…VMTT).

The protein belongs to the HAK/KUP transporter (TC 2.A.72) family.

The protein resides in the cell inner membrane. It catalyses the reaction K(+)(in) + H(+)(in) = K(+)(out) + H(+)(out). Responsible for the low-affinity transport of potassium into the cell. Likely operates as a K(+):H(+) symporter. The polypeptide is Low affinity potassium transport system protein Kup (Escherichia coli O157:H7).